The sequence spans 792 residues: Putative cellulose synthase-like protein H3 (792 aa).

2 helical membrane-spanning segments follow: residues 25–45 and 55–75; these read AWML…VRRA and VGGA…FVWL. Residues 132-154 are disordered; that stretch reads GRHVRDDGGPGARAAGGDGEQGA. Residues 140–151 are compositionally biased toward gly residues; the sequence is GPGARAAGGDGE. Active-site residues include Asp181 and Asp501. The next 6 helical transmembrane spans lie at 579 to 599, 613 to 632, 650 to 670, 706 to 726, 739 to 759, and 768 to 788; these read VWAV…YCLL, FNIT…VEYM, IISA…TIGL, VFIP…IGTW, GPGI…LPFV, and YGIP…FLFC.

Belongs to the glycosyltransferase 2 family. Plant cellulose synthase-like H subfamily.

The protein localises to the golgi apparatus membrane. Functionally, thought to be a Golgi-localized beta-glycan synthase that polymerize the backbones of noncellulosic polysaccharides (hemicelluloses) of plant cell wall. In Oryza sativa subsp. japonica (Rice), this protein is Putative cellulose synthase-like protein H3 (CSLH3).